Here is a 357-residue protein sequence, read N- to C-terminus: Peptide chain release factor 1 (357 aa).

N5-methylglutamine is present on Gln232.

The protein belongs to the prokaryotic/mitochondrial release factor family. Post-translationally, methylated by PrmC. Methylation increases the termination efficiency of RF1.

Its subcellular location is the cytoplasm. In terms of biological role, peptide chain release factor 1 directs the termination of translation in response to the peptide chain termination codons UAG and UAA. The polypeptide is Peptide chain release factor 1 (Nitratidesulfovibrio vulgaris (strain ATCC 29579 / DSM 644 / CCUG 34227 / NCIMB 8303 / VKM B-1760 / Hildenborough) (Desulfovibrio vulgaris)).